A 294-amino-acid chain; its full sequence is Beta-lactamase SME-1 (294 aa).

A signal peptide spans 1 to 27; it reads MSNKVNFKTASFLFSVCLALSAFNAHA. An intrachain disulfide couples Cys-72 to Cys-242. The active-site Nucleophile; acyl-ester intermediate is the Ser-73. Residues Ser-73, Lys-76, Ser-133, and Asn-135 each coordinate a beta-lactam. The active-site Proton acceptor is the Glu-172. Thr-239 serves as a coordination point for a beta-lactam.

Belongs to the class-A beta-lactamase family.

The catalysed reaction is a beta-lactam + H2O = a substituted beta-amino acid. With respect to regulation, partially inhibited by the beta-lactamase-blocking agents, clavulanic acid and tazobactam. Not inhibited by EDTA. In terms of biological role, class A beta-lactamase which confers resistance to the beta-lactam antibiotics, including penicillins, some cephalosporins and carbapenems, to JM109 strain E.coli. Acts via hydrolysis of the beta-lactam ring. Has penicillin-, cephalosporin- and carbapenem-hydrolyzing activities. This chain is Beta-lactamase SME-1, found in Serratia marcescens.